Here is a 94-residue protein sequence, read N- to C-terminus: Co-chaperonin GroES (94 aa).

Belongs to the GroES chaperonin family. As to quaternary structure, heptamer of 7 subunits arranged in a ring. Interacts with the chaperonin GroEL.

The protein resides in the cytoplasm. Together with the chaperonin GroEL, plays an essential role in assisting protein folding. The GroEL-GroES system forms a nano-cage that allows encapsulation of the non-native substrate proteins and provides a physical environment optimized to promote and accelerate protein folding. GroES binds to the apical surface of the GroEL ring, thereby capping the opening of the GroEL channel. The sequence is that of Co-chaperonin GroES from Bacillus cytotoxicus (strain DSM 22905 / CIP 110041 / 391-98 / NVH 391-98).